The following is a 1070-amino-acid chain: DNA-directed RNA polymerase subunit beta (1070 aa).

Belongs to the RNA polymerase beta chain family. In plastids the minimal PEP RNA polymerase catalytic core is composed of four subunits: alpha, beta, beta', and beta''. When a (nuclear-encoded) sigma factor is associated with the core the holoenzyme is formed, which can initiate transcription.

The protein localises to the plastid. The protein resides in the chloroplast. The catalysed reaction is RNA(n) + a ribonucleoside 5'-triphosphate = RNA(n+1) + diphosphate. Its function is as follows. DNA-dependent RNA polymerase catalyzes the transcription of DNA into RNA using the four ribonucleoside triphosphates as substrates. This chain is DNA-directed RNA polymerase subunit beta, found in Silene latifolia (White campion).